Consider the following 131-residue polypeptide: Calvin cycle protein CP12-2, chloroplastic (131 aa).

Residues 1–53 (MATIATGLNIATQRVFVTSENRPVCLAGPVHLNNSWNLGSRTTNRMMKLQPIK) constitute a chloroplast transit peptide. 2 disulfide bridges follow: Cys-75-Cys-84 and Cys-117-Cys-126. A disordered region spans residues 97-131 (AASHARDKKKADGSDPLEEYCKDNPETNECRTYDN). The span at 105-131 (KKADGSDPLEEYCKDNPETNECRTYDN) shows a compositional bias: basic and acidic residues.

The protein belongs to the CP12 family. Monomer. Component of a complex that contains two dimers of PRK, two tetramers of GAPDH and CP12. CP12 associates with GAPDH, causing its conformation to change. This GAPDH/CP12 complex binds PRK to form a half-complex (one unit). This unit probably dimerizes due partially to interactions between the enzymes of each unit. Post-translationally, contains two disulfide bonds; only the oxidized protein, with two disulfide bonds, is active in complex formation. The C-terminal disulfide is involved in the interaction with GAPDH and the N-terminal disulfide mediates the binding of PRK with this binary complex. As to expression, mostly expressed in cotyledons, leaves and flower stalks, and, to a lower extent, in flowers and stems. Barely detectable in roots and siliques.

The protein localises to the plastid. It localises to the chloroplast. Acts as a linker essential in the assembly of a core complex of PRK/GAPDH. Coordinates the reversible inactivation of chloroplast enzymes GAPDH and PRK during darkness in photosynthetic tissues. This Arabidopsis thaliana (Mouse-ear cress) protein is Calvin cycle protein CP12-2, chloroplastic (CP12-2).